The following is a 304-amino-acid chain: Probable porphobilinogen deaminase (304 aa).

An S-(dipyrrolylmethanemethyl)cysteine modification is found at C240.

It belongs to the HMBS family. Dipyrromethane is required as a cofactor.

The catalysed reaction is 4 porphobilinogen + H2O = hydroxymethylbilane + 4 NH4(+). It participates in porphyrin-containing compound metabolism; protoporphyrin-IX biosynthesis; coproporphyrinogen-III from 5-aminolevulinate: step 2/4. Functionally, tetrapolymerization of the monopyrrole PBG into the hydroxymethylbilane pre-uroporphyrinogen in several discrete steps. The polypeptide is Probable porphobilinogen deaminase (Ignicoccus hospitalis (strain KIN4/I / DSM 18386 / JCM 14125)).